The following is a 321-amino-acid chain: GDP-L-fucose synthase (321 aa).

Position 14–20 (14–20) interacts with NADP(+); it reads GGSGLVG. The active-site Proton donor/acceptor is tyrosine 143. Residues lysine 147, 170–173, and histidine 186 each bind NADP(+); that span reads PTNV. Substrate is bound by residues lysine 194, tryptophan 208, arginine 215, and aspartate 277.

It belongs to the NAD(P)-dependent epimerase/dehydratase family. Fucose synthase subfamily. As to quaternary structure, homodimer.

The enzyme catalyses GDP-beta-L-fucose + NADP(+) = GDP-4-dehydro-alpha-D-rhamnose + NADPH + H(+). It participates in nucleotide-sugar biosynthesis; GDP-L-fucose biosynthesis via de novo pathway; GDP-L-fucose from GDP-alpha-D-mannose: step 2/2. Functionally, catalyzes the two-step NADP-dependent conversion of GDP-4-dehydro-6-deoxy-D-mannose to GDP-fucose, involving an epimerase and a reductase reaction. The polypeptide is GDP-L-fucose synthase (Mus musculus (Mouse)).